We begin with the raw amino-acid sequence, 284 residues long: Putative mitochondrial carrier protein PET8 (284 aa).

Solcar repeat units follow at residues 2–75 (NTFF…MKVK), 92–178 (IDTT…LKKT), and 192–271 (KGAI…VHSL). Transmembrane regions (helical) follow at residues 5 to 25 (FLSL…FFPI), 50 to 70 (GLGS…ISYD), 98 to 118 (MLSS…AEVV), 153 to 169 (GWST…CIQF), 194 to 214 (AICG…LDFL), and 252 to 272 (MWIS…HSLL).

It belongs to the mitochondrial carrier (TC 2.A.29) family.

Its subcellular location is the mitochondrion inner membrane. The protein is Putative mitochondrial carrier protein PET8 (PET8) of Saccharomyces cerevisiae (strain ATCC 204508 / S288c) (Baker's yeast).